We begin with the raw amino-acid sequence, 210 residues long: Nucleoside triphosphate pyrophosphatase (210 aa).

Catalysis depends on Asp79, which acts as the Proton acceptor.

Belongs to the Maf family. It depends on a divalent metal cation as a cofactor.

It is found in the cytoplasm. The enzyme catalyses a ribonucleoside 5'-triphosphate + H2O = a ribonucleoside 5'-phosphate + diphosphate + H(+). It catalyses the reaction a 2'-deoxyribonucleoside 5'-triphosphate + H2O = a 2'-deoxyribonucleoside 5'-phosphate + diphosphate + H(+). Functionally, nucleoside triphosphate pyrophosphatase. May have a dual role in cell division arrest and in preventing the incorporation of modified nucleotides into cellular nucleic acids. This is Nucleoside triphosphate pyrophosphatase from Mycolicibacterium paratuberculosis (strain ATCC BAA-968 / K-10) (Mycobacterium paratuberculosis).